Reading from the N-terminus, the 338-residue chain is 5-dehydro-2-deoxygluconokinase (338 aa).

It belongs to the carbohydrate kinase PfkB family.

It carries out the reaction 5-dehydro-2-deoxy-D-gluconate + ATP = 6-phospho-5-dehydro-2-deoxy-D-gluconate + ADP + H(+). It participates in polyol metabolism; myo-inositol degradation into acetyl-CoA; acetyl-CoA from myo-inositol: step 5/7. Catalyzes the phosphorylation of 5-dehydro-2-deoxy-D-gluconate (2-deoxy-5-keto-D-gluconate or DKG) to 6-phospho-5-dehydro-2-deoxy-D-gluconate (DKGP). In Mesomycoplasma hyopneumoniae (strain 232) (Mycoplasma hyopneumoniae), this protein is 5-dehydro-2-deoxygluconokinase.